Reading from the N-terminus, the 757-residue chain is RNA-directed RNA polymerase catalytic subunit (757 aa).

The segment at 53–82 is disordered; that stretch reads GRWTTNTETGAPQLNPIDGPLPEDNEPSGY. Residues 55 to 64 show a composition bias toward polar residues; sequence WTTNTETGAP. 2 consecutive short sequence motifs (nuclear localization signal) follow at residues 187–195 and 203–216; these read RKRRVRDNV and RTIG…NKRS. Residues 249–256 are promoter-binding site; the sequence is RGFVYFVE. Positions 286 to 483 constitute a RdRp catalytic domain; sequence VRKMMTNSQD…GINMSKKKSY (198 aa).

The protein belongs to the influenza viruses polymerase PB1 family. Influenza RNA polymerase is composed of three subunits: PB1, PB2 and PA. Interacts (via N-terminus) with PA (via C-terminus). Interacts (via C-terminus) with PB2 (via N-terminus); this interaction is essential for transcription initiation. Interacts (via C-terminus) with human PKP2 (via N-terminus); the interaction competitively inhibits the interaction between the RNA polymerase subunits PB1 and PB2. Post-translationally, phosphorylated by host PRKCA.

It is found in the host nucleus. Its subcellular location is the host cytoplasm. It carries out the reaction RNA(n) + a ribonucleoside 5'-triphosphate = RNA(n+1) + diphosphate. RNA-dependent RNA polymerase which is responsible for replication and transcription of virus RNA segments. The transcription of viral mRNAs occurs by a unique mechanism called cap-snatching. 5' methylated caps of cellular mRNAs are cleaved after 10-13 nucleotides by PA. In turn, these short capped RNAs are used as primers by PB1 for transcription of viral mRNAs. During virus replication, PB1 initiates RNA synthesis and copy vRNA into complementary RNA (cRNA) which in turn serves as a template for the production of more vRNAs. The polypeptide is RNA-directed RNA polymerase catalytic subunit (Influenza A virus (strain A/Hickox/1940 H1N1)).